Reading from the N-terminus, the 208-residue chain is MKVVEVKHPLVRHKIGLMREGNISTKRFRELAAEVGSLLTYEATADFETEKVTIDGWNGPVEIEQIKGKKVTVVPILRAGLGMMDGVLEHVPSARISVVGIYRDEETLEPVPYFEKLASDMPSRIALVVDPMLATGGSMISTIDLLKERGCTAIKALVLVAAPEGVAALEKAHPDIELYTASIDDCLNEQGYILPGLGDAGDKIFGTK.

5-phospho-alpha-D-ribose 1-diphosphate-binding positions include Arg-78, Arg-103, and 130–138 (DPMLATGGS). Residues Ile-193 and 198–200 (GDA) contribute to the uracil site. Residue Asp-199 participates in 5-phospho-alpha-D-ribose 1-diphosphate binding.

This sequence belongs to the UPRTase family. It depends on Mg(2+) as a cofactor.

It carries out the reaction UMP + diphosphate = 5-phospho-alpha-D-ribose 1-diphosphate + uracil. It participates in pyrimidine metabolism; UMP biosynthesis via salvage pathway; UMP from uracil: step 1/1. Its activity is regulated as follows. Allosterically activated by GTP. In terms of biological role, catalyzes the conversion of uracil and 5-phospho-alpha-D-ribose 1-diphosphate (PRPP) to UMP and diphosphate. The polypeptide is Uracil phosphoribosyltransferase (Shewanella halifaxensis (strain HAW-EB4)).